Reading from the N-terminus, the 144-residue chain is D-aminoacyl-tRNA deacylase (144 aa).

The Gly-cisPro motif, important for rejection of L-amino acids motif lies at Gly-136–Pro-137.

The protein belongs to the DTD family. As to quaternary structure, homodimer.

The protein resides in the cytoplasm. It catalyses the reaction glycyl-tRNA(Ala) + H2O = tRNA(Ala) + glycine + H(+). The catalysed reaction is a D-aminoacyl-tRNA + H2O = a tRNA + a D-alpha-amino acid + H(+). Functionally, an aminoacyl-tRNA editing enzyme that deacylates mischarged D-aminoacyl-tRNAs. Also deacylates mischarged glycyl-tRNA(Ala), protecting cells against glycine mischarging by AlaRS. Acts via tRNA-based rather than protein-based catalysis; rejects L-amino acids rather than detecting D-amino acids in the active site. By recycling D-aminoacyl-tRNA to D-amino acids and free tRNA molecules, this enzyme counteracts the toxicity associated with the formation of D-aminoacyl-tRNA entities in vivo and helps enforce protein L-homochirality. In Actinobacillus pleuropneumoniae serotype 5b (strain L20), this protein is D-aminoacyl-tRNA deacylase.